The following is a 238-amino-acid chain: 2-C-methyl-D-erythritol 4-phosphate cytidylyltransferase (238 aa).

The protein belongs to the IspD/TarI cytidylyltransferase family. IspD subfamily.

The catalysed reaction is 2-C-methyl-D-erythritol 4-phosphate + CTP + H(+) = 4-CDP-2-C-methyl-D-erythritol + diphosphate. Its pathway is isoprenoid biosynthesis; isopentenyl diphosphate biosynthesis via DXP pathway; isopentenyl diphosphate from 1-deoxy-D-xylulose 5-phosphate: step 2/6. In terms of biological role, catalyzes the formation of 4-diphosphocytidyl-2-C-methyl-D-erythritol from CTP and 2-C-methyl-D-erythritol 4-phosphate (MEP). The polypeptide is 2-C-methyl-D-erythritol 4-phosphate cytidylyltransferase (Shewanella amazonensis (strain ATCC BAA-1098 / SB2B)).